The chain runs to 611 residues: Actin-binding LIM protein 2 (611 aa).

4 LIM zinc-binding domains span residues 22 to 81, 81 to 141, 151 to 210, and 210 to 270; these read ILCN…LYGT, TRCF…VSVG, RSCG…KFGI, and IRCD…ARTE. Zn(2+)-binding residues include C83, C86, H103, C106, C109, C112, C131, and C134. Zn(2+) is bound by residues C212, C215, H232, C235, C238, C241, H260, and C263. A compositionally biased stretch (basic and acidic residues) spans 269–278; that stretch reads TEDRNKETRT. Disordered stretches follow at residues 269 to 295 and 336 to 527; these read TEDRNKETRTSSESIISVPASSTSGSP and YISH…DQRN. Low complexity-rich tracts occupy residues 279–295 and 363–372; these read SSESIISVPASSTSGSP and SSPSSTGSVS. Phosphoserine occurs at positions 282, 294, 364, and 367. Residues 393-404 show a composition bias toward polar residues; the sequence is SGRSTPSLSVLS. S452 carries the phosphoserine modification. Phosphothreonine is present on T472. Residues 473–488 are compositionally biased toward polar residues; sequence RTNSPDLDTQSLSHSS. Phosphoserine occurs at positions 476 and 578. An HP domain is found at 543–611; that stretch reads MREYKIYPYD…NDLKKKALLF (69 aa).

As to quaternary structure, interacts with F-actin and ABRA. As to expression, highly expressed in skeletal muscle.

The protein localises to the cytoplasm. Functionally, may act as scaffold protein. May stimulate ABRA activity and ABRA-dependent SRF transcriptional activity. This chain is Actin-binding LIM protein 2 (ABLIM2), found in Homo sapiens (Human).